Consider the following 279-residue polypeptide: Large ribosomal subunit protein uL2 (279 aa).

The interval 223-279 (VAMNPIDHPHGGGEGRTSGGRHPVTPWGKGTKGTRTRSNKSTDKYILRSRHAKKKGR) is disordered. Basic residues predominate over residues 269-279 (LRSRHAKKKGR).

Belongs to the universal ribosomal protein uL2 family. Part of the 50S ribosomal subunit. Forms a bridge to the 30S subunit in the 70S ribosome.

Its function is as follows. One of the primary rRNA binding proteins. Required for association of the 30S and 50S subunits to form the 70S ribosome, for tRNA binding and peptide bond formation. It has been suggested to have peptidyltransferase activity; this is somewhat controversial. Makes several contacts with the 16S rRNA in the 70S ribosome. This is Large ribosomal subunit protein uL2 from Paracoccus denitrificans (strain Pd 1222).